Reading from the N-terminus, the 336-residue chain is Ferrochelatase (336 aa).

Residues H206 and E287 each contribute to the Fe cation site.

The protein belongs to the ferrochelatase family.

The protein localises to the cytoplasm. The catalysed reaction is heme b + 2 H(+) = protoporphyrin IX + Fe(2+). The protein operates within porphyrin-containing compound metabolism; protoheme biosynthesis; protoheme from protoporphyrin-IX: step 1/1. Its function is as follows. Catalyzes the ferrous insertion into protoporphyrin IX. The sequence is that of Ferrochelatase from Neisseria meningitidis serogroup C / serotype 2a (strain ATCC 700532 / DSM 15464 / FAM18).